The sequence spans 147 residues: Myoglobin (147 aa).

Ala-2 carries the post-translational modification N-acetylalanine. The 140-residue stretch at 2–141 folds into the Globin domain; that stretch reads ADFDAVLKCW…IIADLEANYK (140 aa). His-60 is a binding site for nitrite. An O2-binding site is contributed by His-60. Heme b is bound at residue His-89.

The protein belongs to the globin family. In terms of assembly, monomeric.

The protein localises to the cytoplasm. It localises to the sarcoplasm. It catalyses the reaction Fe(III)-heme b-[protein] + nitric oxide + H2O = Fe(II)-heme b-[protein] + nitrite + 2 H(+). The enzyme catalyses H2O2 + AH2 = A + 2 H2O. In terms of biological role, monomeric heme protein which primary function is to store oxygen and facilitate its diffusion within muscle tissues. Reversibly binds oxygen through a pentacoordinated heme iron and enables its timely and efficient release as needed during periods of heightened demand. Depending on the oxidative conditions of tissues and cells, and in addition to its ability to bind oxygen, it also has a nitrite reductase activity whereby it regulates the production of bioactive nitric oxide. Under stress conditions, like hypoxia and anoxia, it also protects cells against reactive oxygen species thanks to its pseudoperoxidase activity. The polypeptide is Myoglobin (mb) (Thunnus albacares (Yellowfin tuna)).